Here is a 170-residue protein sequence, read N- to C-terminus: Putative beta-eliminating lyase-like protein (170 aa).

At K32 the chain carries N6-(pyridoxal phosphate)lysine.

Belongs to the beta-eliminating lyase family. Pyridoxal 5'-phosphate is required as a cofactor.

The chain is Putative beta-eliminating lyase-like protein from Dictyostelium discoideum (Social amoeba).